Reading from the N-terminus, the 671-residue chain is UvrABC system protein B (671 aa).

Residues 25–412 form the Helicase ATP-binding domain; sequence EGIEAGLSHQ…AGRVVEQVVR (388 aa). 38–45 contacts ATP; it reads GVTGSGKT. Positions 91 to 114 match the Beta-hairpin motif; the sequence is YYDYYQPEAYVPSSDTFIEKDASI. In terms of domain architecture, Helicase C-terminal spans 429-582; sequence QVDDLLSEIR…QIAFNEANGI (154 aa). The 36-residue stretch at 632–667 folds into the UVR domain; the sequence is TKRIKQLEEKMMQFARDLEFEAAAQLRDEIAQLRER.

Belongs to the UvrB family. As to quaternary structure, forms a heterotetramer with UvrA during the search for lesions. Interacts with UvrC in an incision complex.

It localises to the cytoplasm. Its function is as follows. The UvrABC repair system catalyzes the recognition and processing of DNA lesions. A damage recognition complex composed of 2 UvrA and 2 UvrB subunits scans DNA for abnormalities. Upon binding of the UvrA(2)B(2) complex to a putative damaged site, the DNA wraps around one UvrB monomer. DNA wrap is dependent on ATP binding by UvrB and probably causes local melting of the DNA helix, facilitating insertion of UvrB beta-hairpin between the DNA strands. Then UvrB probes one DNA strand for the presence of a lesion. If a lesion is found the UvrA subunits dissociate and the UvrB-DNA preincision complex is formed. This complex is subsequently bound by UvrC and the second UvrB is released. If no lesion is found, the DNA wraps around the other UvrB subunit that will check the other stand for damage. This Pseudomonas putida (strain ATCC 47054 / DSM 6125 / CFBP 8728 / NCIMB 11950 / KT2440) protein is UvrABC system protein B.